Here is a 72-residue protein sequence, read N- to C-terminus: Translation initiation factor IF-1 (72 aa).

In terms of domain architecture, S1-like spans 1–72 (MTKEDNIEMQ…TKGRIIFRSR (72 aa)).

The protein belongs to the IF-1 family. As to quaternary structure, component of the 30S ribosomal translation pre-initiation complex which assembles on the 30S ribosome in the order IF-2 and IF-3, IF-1 and N-formylmethionyl-tRNA(fMet); mRNA recruitment can occur at any time during PIC assembly.

It is found in the cytoplasm. In terms of biological role, one of the essential components for the initiation of protein synthesis. Stabilizes the binding of IF-2 and IF-3 on the 30S subunit to which N-formylmethionyl-tRNA(fMet) subsequently binds. Helps modulate mRNA selection, yielding the 30S pre-initiation complex (PIC). Upon addition of the 50S ribosomal subunit IF-1, IF-2 and IF-3 are released leaving the mature 70S translation initiation complex. The chain is Translation initiation factor IF-1 from Buchnera aphidicola subsp. Schizaphis graminum (strain Sg).